The primary structure comprises 753 residues: MSESSSDSDSSCGWTVINHEGSDIEIVNSATASDNCGLTLECSLVEQEELPVLYVGHGGEESSANNTSSVGETMLSSMRETKSAAEVEEAPSPEDNVYFGTTSDDSDIVTLEPPKLEEMGNQEVTIQEAPSSDDLNMGSSSSSQYAFCQPEPVFSSQPSDEESSSDDTSHEPSPAPRRRRNRKKTVSISESEEPPLAEPEDEPSKEPSKRHFSRGLNKCVILALVIAVSMGFGHFYGTIQIQKQLVRKTHEDELDGVKGYLSQRKQEQESFLDFKSLKENLERCWTVTESEKITFETQKKNLAAENQYLRISLEKEEQALSSLQEELRQLREQIRLLEDKGTSTQLVRENQVLKQYLEVEKQKTDSFLREREMLLEEARMLKRDLEREQLTAMALRAELEQFIPGQAQSRAESPSVQTEEKEVGLLQQRLAELEQKLIFEQQRSDLWERLYVEAKDQHGKQETDGRKRGSRGSHRAKSKSKETFLGTVKETFDAMKNSTKEFVRHHKEKIKQAKEAVKENLKKFSDSVKSTFRHFKDTTKNIFDEKGSKRFRAPKEAATEKTRTAYSYSSYSQQEAPNQNQNCRRPSAQRDGGREKPSHSEEIRKNANSYTYKAKSDCRGTHSTRRVCSGMFECAGQEAISPVNKASPVRMNDFKQLIHWYLLNELETFHHWKELDQFISPFFPNGVFRHDQQLFADFVDDVKGYLKSIKEYRVEDGNLEKLDGCIYRHFGHVFALPFGPRSVYIKPCYYNSF.

Residues 1 to 218 (MSESSSDSDS…KRHFSRGLNK (218 aa)) are Cytoplasmic-facing. The interaction with MCF2L and SRC stretch occupies residues 1–307 (MSESSSDSDS…QKKNLAAENQ (307 aa)). The tract at residues 57 to 211 (HGGEESSANN…EPSKEPSKRH (155 aa)) is disordered. 2 stretches are compositionally biased toward polar residues: residues 62–78 (SSAN…LSSM) and 122–138 (QEVT…LNMG). Over residues 176 to 185 (PRRRRNRKKT) the composition is skewed to basic residues. The residue at position 187 (Ser187) is a Phosphoserine. The span at 190–201 (ESEEPPLAEPED) shows a compositional bias: acidic residues. Residues 219-239 (CVILALVIAVSMGFGHFYGTI) traverse the membrane as a helical; Signal-anchor for type II membrane protein segment. Residues 240–753 (QIQKQLVRKT…YIKPCYYNSF (514 aa)) lie on the Lumenal side of the membrane. The stretch at 298–449 (QKKNLAAENQ…EQQRSDLWER (152 aa)) forms a coiled coil. Residues 457–467 (QHGKQETDGRK) show a composition bias toward basic and acidic residues. The disordered stretch occupies residues 457–484 (QHGKQETDGRKRGSRGSHRAKSKSKETF). Basic residues predominate over residues 468–478 (RGSRGSHRAKS). Residues 503–529 (VRHHKEKIKQAKEAVKENLKKFSDSVK) are a coiled coil. Basic and acidic residues predominate over residues 553–563 (APKEAATEKTR). The disordered stretch occupies residues 553–606 (APKEAATEKTRTAYSYSSYSQQEAPNQNQNCRRPSAQRDGGREKPSHSEEIRKN). Over residues 573–584 (QQEAPNQNQNCR) the composition is skewed to polar residues. Positions 591 to 605 (DGGREKPSHSEEIRK) are enriched in basic and acidic residues.

It belongs to the CCPG1 family. In terms of assembly, interacts with MCF2L. May interact with MCF2, ARHGEF1, BCR, VAV1 and FGD1, but not with TIAM1. Interacts with GTP-bound CDC42 and SRC.

Its subcellular location is the cytoplasmic granule membrane. In terms of biological role, acts as an assembly platform for Rho protein signaling complexes. Limits guanine nucleotide exchange activity of MCF2L toward RHOA, which results in an inhibition of both its transcriptional activation ability and its transforming activity. Does not inhibit activity of MCF2L toward CDC42, or activity of MCF2 toward either RHOA or CDC42. May be involved in cell cycle regulation. This is Cell cycle progression protein 1 (Ccpg1) from Mus musculus (Mouse).